We begin with the raw amino-acid sequence, 666 residues long: MSSLICFIFLFLFSFITSFTASAQNPFYLYHNCSITTTYSSNSTYSTNLKTLLSSLSSRNASYSTGFQNATAGQAPDMVTGLFLCRGNVSPEVCRSCIALSVNESLSRCPNEREAVFYYEQCMLRYSNRNILSTLNTDGGVFMQNARNPISVKQDRFRDLVLNPMNLAAIEAARSIKRFAVTKFDLNALQSLYGMVQCTPDLTEQDCLDCLQQSINQVTYDKIGGRTFLPSCTSRYDNYEFYNEFNVGTPQDSSPRPGKGGNSSVIVIAVVVPITVLFLLFVAFFSVRRAKRKKTIGAIPLFKVKRKETEVTEPPAETTDGDDITTAGSLQFDFKAIVAATDIFLPINKLGQGGFGEVYKGTFPSGVQVAVKRLSKNSGQGEKEFENEVVVVAKLQHRNLVKLLGYCLEGEEKILVYEFVPNKSLDYFLFDPTMQGQLDWSRRYKIIGGIARGILYLHQDSRLTIIHRDLKAGNILLDADMNPKVADFGMARIFGMDQTEANTRRVVGTYGYMAPEYAMYGKFSMKSDVYSFGVLVLEIVSGMKNSSLDQMDGSISNLVTYTWRLWSNGSPSELVDPSFGDNYQTSEITRCIHIALLCVQEDANDRPTMSAIVQMLTTSSIALAVPRPPGFFLRSKQEQAERACPSMDTSDLFSIDEASITSVAPR.

Positions 1 to 23 (MSSLICFIFLFLFSFITSFTASA) are cleaved as a signal peptide. The Extracellular portion of the chain corresponds to 24 to 264 (QNPFYLYHNC…PRPGKGGNSS (241 aa)). Gnk2-homologous domains are found at residues 27-131 (FYLY…NRNI) and 137-241 (TDGG…NYEF). Asn32, Asn42, Asn60, Asn69, and Asn103 each carry an N-linked (GlcNAc...) asparagine glycan. Asn262 carries an N-linked (GlcNAc...) asparagine glycan. The helical transmembrane segment at 265 to 285 (VIVIAVVVPITVLFLLFVAFF) threads the bilayer. Residues 286–666 (SVRRAKRKKT…EASITSVAPR (381 aa)) are Cytoplasmic-facing. One can recognise a Protein kinase domain in the interval 344–623 (FLPINKLGQG…QMLTTSSIAL (280 aa)). Residues 350–358 (LGQGGFGEV) and Lys372 each bind ATP. A Phosphotyrosine modification is found at Tyr417. The active-site Proton acceptor is Asp469. Residue Thr509 is modified to Phosphothreonine. At Tyr517 the chain carries Phosphotyrosine.

This sequence belongs to the protein kinase superfamily. Ser/Thr protein kinase family. CRK subfamily.

It is found in the membrane. It carries out the reaction L-seryl-[protein] + ATP = O-phospho-L-seryl-[protein] + ADP + H(+). It catalyses the reaction L-threonyl-[protein] + ATP = O-phospho-L-threonyl-[protein] + ADP + H(+). This is Putative cysteine-rich receptor-like protein kinase 20 (CRK20) from Arabidopsis thaliana (Mouse-ear cress).